Reading from the N-terminus, the 130-residue chain is Glycoprotein hormone beta-5 (130 aa).

An N-terminal signal peptide occupies residues 1-24 (MKLAFLFLGPMALLLLAGYGCVLG). Cystine bridges form between C36-C84, C50-C99, C60-C115, C64-C117, and C120-C127. An N-linked (GlcNAc...) asparagine glycan is attached at N87.

Belongs to the glycoprotein hormones subunit beta family. Heterodimer with GPHA2; this heterodimer interacts with thyroid-stimulating hormone receptor (TSHR), and hence stimulates cAMP production. In terms of processing, N-glycosylated. Highly expressed in brain and at low levels in pituitary. Also found in retina, testis and skin but not in pancreas, parotid, kidney, stomach, liver, colon, small intestine, thyroid, brain or adrenal gland. In pituitary, colocalizes with ACTH, suggesting that it is located in corticotrophs.

It localises to the secreted. Functions as a heterodimeric glycoprotein hormone with GPHA2 able to bind and activate the thyroid-stimulating hormone receptor (TSHR), leading to increased cAMP production. Plays a central role in controlling thyroid cell metabolism. In Homo sapiens (Human), this protein is Glycoprotein hormone beta-5 (GPHB5).